Here is a 515-residue protein sequence, read N- to C-terminus: Leucine-rich repeat transmembrane neuronal protein 2 (515 aa).

Positions 1-33 (MGLHFKWPLGAPMLAAIYAMSVVLKMLPALGMA) are cleaved as a signal peptide. The LRRNT domain occupies 34 to 61 (CPPKCRCEKLLFYCDSQGFHSVPNATDK). Topologically, residues 34–421 (CPPKCRCEKL…EPDNAIFTQR (388 aa)) are extracellular. Asparagine 57 carries N-linked (GlcNAc...) asparagine glycosylation. LRR repeat units lie at residues 63–83 (SLGL…QFAS), 86–107 (QLTW…AFQG), 110–131 (KLKE…TFTQ), 134–155 (NLQN…LFYG), 158–179 (KLQT…LFWD), 182–203 (SLEF…GFAG), 206–227 (KLRE…HFLR), 230–251 (SLHT…MDWT), 254–275 (TLEK…VFET), and 278–299 (NLKI…ILNS). Asparagine 126 carries an N-linked (GlcNAc...) asparagine glycan. Asparagine 243 carries an N-linked (GlcNAc...) asparagine glycan. One can recognise an LRRCT domain in the interval 311–362 (NLWECSPRVCALASWLGSFQGRWEHSILCHSPDHTQGEDILDAVHGFQLCWN). Asparagine 362 is a glycosylation site (N-linked (GlcNAc...) asparagine). The chain crosses the membrane as a helical span at residues 422-442 (VITGTMALLFSFFFIIFIVFI). The Cytoplasmic portion of the chain corresponds to 443 to 515 (SRKCCPPTLR…QQLPYKECEV (73 aa)). An Involved in DLG4-binding motif is present at residues 512–515 (ECEV).

The protein belongs to the LRRTM family. As to quaternary structure, interacts with DLG4. Interacts with neurexin NRXN1; interaction is mediated by heparan sulfate glycan modification on neurexin. In terms of tissue distribution, expressed in neuronal tissues.

It is found in the cell membrane. Its subcellular location is the postsynaptic cell membrane. Functionally, involved in the development and maintenance of excitatory synapses in the vertebrate nervous system. Regulates surface expression of AMPA receptors and instructs the development of functional glutamate release sites. Acts as a ligand for the presynaptic receptors NRXN1-A and NRXN1-B. The chain is Leucine-rich repeat transmembrane neuronal protein 2 (Lrrtm2) from Mus musculus (Mouse).